A 269-amino-acid polypeptide reads, in one-letter code: Diphthine synthase (269 aa).

S-adenosyl-L-methionine-binding positions include Leu-10, Asp-87, Val-90, 115–116 (SI), Leu-166, Ala-209, and His-234.

It belongs to the diphthine synthase family. In terms of assembly, homodimer.

It carries out the reaction 2-[(3S)-amino-3-carboxypropyl]-L-histidyl-[translation elongation factor 2] + 3 S-adenosyl-L-methionine = diphthine-[translation elongation factor 2] + 3 S-adenosyl-L-homocysteine + 3 H(+). It participates in protein modification; peptidyl-diphthamide biosynthesis. Functionally, S-adenosyl-L-methionine-dependent methyltransferase that catalyzes the trimethylation of the amino group of the modified target histidine residue in translation elongation factor 2 (EF-2), to form an intermediate called diphthine. The three successive methylation reactions represent the second step of diphthamide biosynthesis. The protein is Diphthine synthase of Pyrococcus furiosus (strain ATCC 43587 / DSM 3638 / JCM 8422 / Vc1).